The following is a 422-amino-acid chain: Dihydrolipoyllysine-residue succinyltransferase component of 2-oxoglutarate dehydrogenase complex (422 aa).

The 76-residue stretch at 1 to 76 (MPEVKVPELA…EVGQAIAVIG (76 aa)) folds into the Lipoyl-binding domain. Lys42 is subject to N6-lipoyllysine. A disordered region spans residues 77-184 (EGSGNASKEN…APAKEEKKYN (108 aa)). Polar residues-rich tracts occupy residues 80–94 (GNAS…TPQQ) and 114–130 (EVNQ…NATP). Positions 127-163 (NATPSARRYARENGVNLAEVSPKTNDVVRKEDIDKKQ) constitute a Peripheral subunit-binding (PSBD) domain. Residues 152 to 163 (DVVRKEDIDKKQ) show a composition bias toward basic and acidic residues. Over residues 164 to 176 (QAPASTQTTQQAP) the composition is skewed to low complexity. Residues His393 and Asp397 contribute to the active site.

The protein belongs to the 2-oxoacid dehydrogenase family. In terms of assembly, forms a 24-polypeptide structural core with octahedral symmetry. Part of the 2-oxoglutarate dehydrogenase (OGDH) complex composed of E1 (2-oxoglutarate dehydrogenase), E2 (dihydrolipoamide succinyltransferase) and E3 (dihydrolipoamide dehydrogenase); the complex contains multiple copies of the three enzymatic components (E1, E2 and E3). (R)-lipoate is required as a cofactor.

It carries out the reaction N(6)-[(R)-dihydrolipoyl]-L-lysyl-[protein] + succinyl-CoA = N(6)-[(R)-S(8)-succinyldihydrolipoyl]-L-lysyl-[protein] + CoA. It functions in the pathway amino-acid degradation; L-lysine degradation via saccharopine pathway; glutaryl-CoA from L-lysine: step 6/6. Its function is as follows. E2 component of the 2-oxoglutarate dehydrogenase (OGDH) complex which catalyzes the second step in the conversion of 2-oxoglutarate to succinyl-CoA and CO(2). This Staphylococcus aureus (strain bovine RF122 / ET3-1) protein is Dihydrolipoyllysine-residue succinyltransferase component of 2-oxoglutarate dehydrogenase complex (odhB).